The chain runs to 119 residues: Flagellar transcriptional regulator FlhD (119 aa).

Belongs to the FlhD family. As to quaternary structure, homodimer; disulfide-linked. Forms a heterohexamer composed of two FlhC and four FlhD subunits. Each FlhC binds a FlhD dimer, forming a heterotrimer, and a hexamer assembles by dimerization of two heterotrimers.

It localises to the cytoplasm. Functions in complex with FlhC as a master transcriptional regulator that regulates transcription of several flagellar and non-flagellar operons by binding to their promoter region. Activates expression of class 2 flagellar genes, including fliA, which is a flagellum-specific sigma factor that turns on the class 3 genes. Also regulates genes whose products function in a variety of physiological pathways. The chain is Flagellar transcriptional regulator FlhD from Pectobacterium atrosepticum (strain SCRI 1043 / ATCC BAA-672) (Erwinia carotovora subsp. atroseptica).